The chain runs to 385 residues: S-adenosylmethionine synthase (385 aa).

ATP is bound at residue H15. Mg(2+) is bound at residue D17. E43 serves as a coordination point for K(+). Residues E56 and Q99 each coordinate L-methionine. The segment at 99–109 (QSVDIAQGVDR) is flexible loop. ATP is bound by residues 164-166 (DAK), 230-231 (RF), D239, 245-246 (RK), and K266. D239 contacts L-methionine. K270 lines the L-methionine pocket.

This sequence belongs to the AdoMet synthase family. In terms of assembly, homotetramer; dimer of dimers. It depends on Mg(2+) as a cofactor. K(+) is required as a cofactor.

Its subcellular location is the cytoplasm. The catalysed reaction is L-methionine + ATP + H2O = S-adenosyl-L-methionine + phosphate + diphosphate. It participates in amino-acid biosynthesis; S-adenosyl-L-methionine biosynthesis; S-adenosyl-L-methionine from L-methionine: step 1/1. Its function is as follows. Catalyzes the formation of S-adenosylmethionine (AdoMet) from methionine and ATP. The overall synthetic reaction is composed of two sequential steps, AdoMet formation and the subsequent tripolyphosphate hydrolysis which occurs prior to release of AdoMet from the enzyme. This Alkalilimnicola ehrlichii (strain ATCC BAA-1101 / DSM 17681 / MLHE-1) protein is S-adenosylmethionine synthase.